A 98-amino-acid polypeptide reads, in one-letter code: Complement inhibitor RaCI1 (98 aa).

The first 20 residues, 1–20, serve as a signal peptide directing secretion; sequence MNAMLVLFIASALFISEHNT. 3 disulfide bridges follow: cysteine 33-cysteine 57, cysteine 38-cysteine 59, and cysteine 53-cysteine 74. The interval 79-98 is disordered; it reads TTKPPMAPGDNKDNKEEESN. The segment covering 88–98 has biased composition (basic and acidic residues); the sequence is DNKDNKEEESN.

It belongs to the RaCI family. Expressed in salivary glands.

Its subcellular location is the secreted. Its function is as follows. Complement inhibitor. Prevents complement-mediated C5 activation by binding to C5. Binds C5 at a different binding site than the other tick complement inhibitors OmCI and CirpT1, and the drug eculizumab. Inhibits the complement in human and guinea pig but not in other species tested (rabbit, rat, mouse, and pig). The protein is Complement inhibitor RaCI1 of Rhipicephalus appendiculatus (Brown ear tick).